The sequence spans 485 residues: Probable glycine dehydrogenase (decarboxylating) subunit 2 (485 aa).

Lysine 273 carries the N6-(pyridoxal phosphate)lysine modification.

Belongs to the GcvP family. C-terminal subunit subfamily. As to quaternary structure, the glycine cleavage system is composed of four proteins: P, T, L and H. In this organism, the P 'protein' is a heterodimer of two subunits. Pyridoxal 5'-phosphate serves as cofactor.

The catalysed reaction is N(6)-[(R)-lipoyl]-L-lysyl-[glycine-cleavage complex H protein] + glycine + H(+) = N(6)-[(R)-S(8)-aminomethyldihydrolipoyl]-L-lysyl-[glycine-cleavage complex H protein] + CO2. In terms of biological role, the glycine cleavage system catalyzes the degradation of glycine. The P protein binds the alpha-amino group of glycine through its pyridoxal phosphate cofactor; CO(2) is released and the remaining methylamine moiety is then transferred to the lipoamide cofactor of the H protein. The polypeptide is Probable glycine dehydrogenase (decarboxylating) subunit 2 (Caldanaerobacter subterraneus subsp. tengcongensis (strain DSM 15242 / JCM 11007 / NBRC 100824 / MB4) (Thermoanaerobacter tengcongensis)).